Consider the following 1399-residue polypeptide: DNA-directed RNA polymerase subunit beta' (1399 aa).

Zn(2+) is bound by residues Cys-70, Cys-72, Cys-85, and Cys-88. Residues Asp-460, Asp-462, and Asp-464 each contribute to the Mg(2+) site. Cys-814, Cys-888, Cys-895, and Cys-898 together coordinate Zn(2+).

It belongs to the RNA polymerase beta' chain family. The RNAP catalytic core consists of 2 alpha, 1 beta, 1 beta' and 1 omega subunit. When a sigma factor is associated with the core the holoenzyme is formed, which can initiate transcription. Mg(2+) serves as cofactor. Requires Zn(2+) as cofactor.

It carries out the reaction RNA(n) + a ribonucleoside 5'-triphosphate = RNA(n+1) + diphosphate. DNA-dependent RNA polymerase catalyzes the transcription of DNA into RNA using the four ribonucleoside triphosphates as substrates. The chain is DNA-directed RNA polymerase subunit beta' from Pseudomonas putida (strain ATCC 47054 / DSM 6125 / CFBP 8728 / NCIMB 11950 / KT2440).